The following is a 339-amino-acid chain: Uroporphyrinogen decarboxylase (339 aa).

Substrate contacts are provided by residues Arg21 to Arg25, Asp71, Tyr147, Ser202, and His315.

This sequence belongs to the uroporphyrinogen decarboxylase family. In terms of assembly, homodimer.

It localises to the cytoplasm. It carries out the reaction uroporphyrinogen III + 4 H(+) = coproporphyrinogen III + 4 CO2. It functions in the pathway porphyrin-containing compound metabolism; protoporphyrin-IX biosynthesis; coproporphyrinogen-III from 5-aminolevulinate: step 4/4. In terms of biological role, catalyzes the decarboxylation of four acetate groups of uroporphyrinogen-III to yield coproporphyrinogen-III. The chain is Uroporphyrinogen decarboxylase from Helicobacter pylori (strain G27).